The following is a 553-amino-acid chain: Dihydroxy-acid dehydratase (553 aa).

C49 contributes to the [2Fe-2S] cluster binding site. Residue D81 participates in Mg(2+) binding. C122 is a binding site for [2Fe-2S] cluster. Positions 123 and 124 each coordinate Mg(2+). K124 is modified (N6-carboxylysine). C194 is a binding site for [2Fe-2S] cluster. Mg(2+) is bound at residue E444. Residue S470 is the Proton acceptor of the active site.

It belongs to the IlvD/Edd family. In terms of assembly, homodimer. Requires [2Fe-2S] cluster as cofactor. Mg(2+) is required as a cofactor.

It carries out the reaction (2R)-2,3-dihydroxy-3-methylbutanoate = 3-methyl-2-oxobutanoate + H2O. It catalyses the reaction (2R,3R)-2,3-dihydroxy-3-methylpentanoate = (S)-3-methyl-2-oxopentanoate + H2O. Its pathway is amino-acid biosynthesis; L-isoleucine biosynthesis; L-isoleucine from 2-oxobutanoate: step 3/4. It functions in the pathway amino-acid biosynthesis; L-valine biosynthesis; L-valine from pyruvate: step 3/4. Functions in the biosynthesis of branched-chain amino acids. Catalyzes the dehydration of (2R,3R)-2,3-dihydroxy-3-methylpentanoate (2,3-dihydroxy-3-methylvalerate) into 2-oxo-3-methylpentanoate (2-oxo-3-methylvalerate) and of (2R)-2,3-dihydroxy-3-methylbutanoate (2,3-dihydroxyisovalerate) into 2-oxo-3-methylbutanoate (2-oxoisovalerate), the penultimate precursor to L-isoleucine and L-valine, respectively. This Aeropyrum pernix (strain ATCC 700893 / DSM 11879 / JCM 9820 / NBRC 100138 / K1) protein is Dihydroxy-acid dehydratase.